We begin with the raw amino-acid sequence, 83 residues long: MVTIRLARGGSKKRPFYHLTVTNSRNARDGRFVERVGFFNPIASGAEVKLSVNQERVTYWLSQGAQPSERVAQLLKEAAKAAA.

It belongs to the bacterial ribosomal protein bS16 family.

In Pseudomonas entomophila (strain L48), this protein is Small ribosomal subunit protein bS16.